A 314-amino-acid chain; its full sequence is Protein SPOROCYTELESS (314 aa).

The segment covering M1 to N17 has biased composition (polar residues). Disordered regions lie at residues M1–D20 and G33–R62. The short motif at R62–E70 is the SPL element. The short motif at I308–L314 is the EAR element.

It belongs to the NOZZLE family. As to quaternary structure, homodimer and heterodimer with SPEARs. Interacts in vitro with YAB1, YAB3 and YAB4. Interacts (via EAR motif) with TPL, TPR1, TPR2, TPR3 and TPR4. Interacts with SPEAR1, SPEAR2, SPEAR3, SPEAR4, TCP1, TCP6, TCP8, TCP9, TCP11, TCP15, TCP20, TCP21 and TCP23. Interacts with TCP2, TCP3, TCP4, TCP5, TCP10, TCP13, TCP17 and TCP24. Expressed in flower buds. Not found in leaves, siliques and stems. Detected in rosette leaves, stem tissue and seedlings.

The protein localises to the nucleus. Transcriptional regulator of sporocyte development. Acts as an adapter-like transcriptional repressor recruiting TPL/TPR corepressors to inhibit TCP transcription factors. Required for nucellus and embryo sac development. Plays a central role in patterning both the proximal-distal and the adaxial-abaxial axes during ovule development. Involved in establishing the prospective chalaza of the ovule and in controlling the cell number and the length of the funiculus, and is required for the development of the integuments. Required, with BEL1, for cytokinin-induced PIN1 expression in ovules. Involved in controlling stamen identity. May also regulate the morphology of lateral organs by repressing auxin production. This chain is Protein SPOROCYTELESS, found in Arabidopsis thaliana (Mouse-ear cress).